The following is a 280-amino-acid chain: Diaminopimelate epimerase (280 aa).

Asn-11 and Asn-64 together coordinate substrate. Catalysis depends on Cys-73, which acts as the Proton donor. Substrate contacts are provided by residues 74–75 (GN), Asn-162, Asn-195, and 213–214 (ER). The active-site Proton acceptor is Cys-222. 223–224 (GT) is a binding site for substrate.

It belongs to the diaminopimelate epimerase family. In terms of assembly, homodimer.

It localises to the cytoplasm. It carries out the reaction (2S,6S)-2,6-diaminopimelate = meso-2,6-diaminopimelate. Its pathway is amino-acid biosynthesis; L-lysine biosynthesis via DAP pathway; DL-2,6-diaminopimelate from LL-2,6-diaminopimelate: step 1/1. In terms of biological role, catalyzes the stereoinversion of LL-2,6-diaminopimelate (L,L-DAP) to meso-diaminopimelate (meso-DAP), a precursor of L-lysine and an essential component of the bacterial peptidoglycan. The chain is Diaminopimelate epimerase from Pelotomaculum thermopropionicum (strain DSM 13744 / JCM 10971 / SI).